Here is a 29-residue protein sequence, read N- to C-terminus: Lambda-theraphotoxin-Ec2a (29 aa).

3 disulfide bridges follow: Cys-2–Cys-16, Cys-9–Cys-21, and Cys-15–Cys-25.

The protein belongs to the neurotoxin 30 (phrixotoxin) family. In terms of tissue distribution, expressed by the venom gland.

The protein resides in the secreted. Insect-selective neurotoxin that potently blocks insect calcium-activated potassium (BKCa) channels (Slo-type) in cockroach dorsal unpaired median (DUM) neurons (IC(50)=3.7 nM). This occurs in the absence of any shifts in the voltage dependence of activation. At high concentrations (330 nM), it partially inhibits cockroach delayed-rectifier potassium channels (Kv) currents. May interact with the turret and/or loop region of the external entrance to the channel and does not project deeply into the pore of the channel. In vivo, does not show toxicity in mice after intracerebroventricular injection of up to 25 pmol/g (1.8 ug/20 g mouse). The protein is Lambda-theraphotoxin-Ec2a of Eucratoscelus constrictus (African red-rump baboon spider).